The primary structure comprises 482 residues: tRNA sulfurtransferase (482 aa).

Residues 61 to 165 form the THUMP domain; that stretch reads LAIRDALTRI…DDRLLLIKGR (105 aa). Residues 183–184, K265, G287, and Q296 contribute to the ATP site; that span reads LI. An intrachain disulfide couples C344 to C456. The region spanning 404–482 is the Rhodanese domain; that stretch reads FGPNDVILDI…GFNNVKVYRP (79 aa). The active-site Cysteine persulfide intermediate is the C456.

It belongs to the ThiI family.

Its subcellular location is the cytoplasm. The enzyme catalyses [ThiI sulfur-carrier protein]-S-sulfanyl-L-cysteine + a uridine in tRNA + 2 reduced [2Fe-2S]-[ferredoxin] + ATP + H(+) = [ThiI sulfur-carrier protein]-L-cysteine + a 4-thiouridine in tRNA + 2 oxidized [2Fe-2S]-[ferredoxin] + AMP + diphosphate. It carries out the reaction [ThiS sulfur-carrier protein]-C-terminal Gly-Gly-AMP + S-sulfanyl-L-cysteinyl-[cysteine desulfurase] + AH2 = [ThiS sulfur-carrier protein]-C-terminal-Gly-aminoethanethioate + L-cysteinyl-[cysteine desulfurase] + A + AMP + 2 H(+). Its pathway is cofactor biosynthesis; thiamine diphosphate biosynthesis. Functionally, catalyzes the ATP-dependent transfer of a sulfur to tRNA to produce 4-thiouridine in position 8 of tRNAs, which functions as a near-UV photosensor. Also catalyzes the transfer of sulfur to the sulfur carrier protein ThiS, forming ThiS-thiocarboxylate. This is a step in the synthesis of thiazole, in the thiamine biosynthesis pathway. The sulfur is donated as persulfide by IscS. The protein is tRNA sulfurtransferase of Escherichia coli O9:H4 (strain HS).